Here is a 255-residue protein sequence, read N- to C-terminus: MSIRVIIAGFKGKMGQAACQMVLTDPDLDLVAVLDPFESESEWQGIPVFKDKADLACFEADVWVDFTTPAVAYENTRFALENGFAPVVGTTGFTSEEIAELKEFSRTQDLGGLIAPNFALGAVLLMQFATQAAKYFPNVEIIELHHDKKKDAPSGTAIKTAELMAEIRESIQQGAADEEELIAGARGADFDGMRIHSVRLPGLVAHQEVIFGNQGEGLTLRHDSYDRISFMTGVNLGIKEVVKRHELVYGLEHLL.

NAD(+) contacts are provided by residues 9 to 14, Asp-35, 89 to 91, and 115 to 118; these read GFKGKM, GTT, and APNF. His-145 serves as the catalytic Proton donor/acceptor. Residue His-146 participates in (S)-2,3,4,5-tetrahydrodipicolinate binding. The active-site Proton donor is the Lys-149. 155-156 contacts (S)-2,3,4,5-tetrahydrodipicolinate; it reads GT.

Belongs to the DapB family.

The protein resides in the cytoplasm. It carries out the reaction (S)-2,3,4,5-tetrahydrodipicolinate + NAD(+) + H2O = (2S,4S)-4-hydroxy-2,3,4,5-tetrahydrodipicolinate + NADH + H(+). The enzyme catalyses (S)-2,3,4,5-tetrahydrodipicolinate + NADP(+) + H2O = (2S,4S)-4-hydroxy-2,3,4,5-tetrahydrodipicolinate + NADPH + H(+). It functions in the pathway amino-acid biosynthesis; L-lysine biosynthesis via DAP pathway; (S)-tetrahydrodipicolinate from L-aspartate: step 4/4. Catalyzes the conversion of 4-hydroxy-tetrahydrodipicolinate (HTPA) to tetrahydrodipicolinate. This is 4-hydroxy-tetrahydrodipicolinate reductase from Streptococcus pneumoniae (strain P1031).